The chain runs to 307 residues: 4-hydroxythreonine-4-phosphate dehydrogenase (307 aa).

Substrate contacts are provided by His-126 and Thr-127. 3 residues coordinate a divalent metal cation: His-156, His-195, and His-251. 3 residues coordinate substrate: Lys-259, Asn-268, and Arg-277.

Belongs to the PdxA family. In terms of assembly, homodimer. Requires Zn(2+) as cofactor. It depends on Mg(2+) as a cofactor. The cofactor is Co(2+).

It is found in the cytoplasm. It catalyses the reaction 4-(phosphooxy)-L-threonine + NAD(+) = 3-amino-2-oxopropyl phosphate + CO2 + NADH. Its pathway is cofactor biosynthesis; pyridoxine 5'-phosphate biosynthesis; pyridoxine 5'-phosphate from D-erythrose 4-phosphate: step 4/5. Functionally, catalyzes the NAD(P)-dependent oxidation of 4-(phosphooxy)-L-threonine (HTP) into 2-amino-3-oxo-4-(phosphooxy)butyric acid which spontaneously decarboxylates to form 3-amino-2-oxopropyl phosphate (AHAP). The protein is 4-hydroxythreonine-4-phosphate dehydrogenase of Helicobacter pylori (strain ATCC 700392 / 26695) (Campylobacter pylori).